Here is a 461-residue protein sequence, read N- to C-terminus: Tubulin gamma-1 chain (461 aa).

A GTP-binding site is contributed by 142–148; the sequence is AGGTGSG.

It belongs to the tubulin family.

Its subcellular location is the cytoplasm. It localises to the cytoskeleton. The protein localises to the microtubule organizing center. The protein resides in the centrosome. Functionally, tubulin is the major constituent of microtubules. The gamma chain is found at microtubule organizing centers (MTOC) such as the spindle poles or the centrosome, suggesting that it is involved in the minus-end nucleation of microtubule assembly. This Euplotoides octocarinatus (Freshwater ciliate) protein is Tubulin gamma-1 chain.